The following is a 151-amino-acid chain: Regulatory protein RecX (151 aa).

It belongs to the RecX family.

The protein resides in the cytoplasm. Functionally, modulates RecA activity. The sequence is that of Regulatory protein RecX from Herminiimonas arsenicoxydans.